A 148-amino-acid polypeptide reads, in one-letter code: Single-stranded DNA-binding protein, mitochondrial (148 aa).

The transit peptide at 1–16 directs the protein to the mitochondrion; that stretch reads MFRRPVVQVLRQFVRH. The region spanning 30 to 141 is the SSB domain; the sequence is LNRVQLLGRV…IIADNIIFLS (112 aa). Phosphoserine is present on residues serine 67 and serine 79. Lysine 113 carries the post-translational modification N6-acetyllysine. N6-succinyllysine is present on lysine 122.

In terms of assembly, homotetramer. Interacts with MPG/AAG, through inhibition of its glycosylase activity it potentially prevents formation of DNA breaks in ssDNA, ensuring that base removal primarily occurs in dsDNA. Interacts with POLDIP2. Interacts with PRIMPOL.

The protein localises to the mitochondrion. It localises to the mitochondrion matrix. Its subcellular location is the mitochondrion nucleoid. In terms of biological role, binds preferentially and cooperatively to pyrimidine rich single-stranded DNA (ss-DNA). In vitro, required to maintain the copy number of mitochondrial DNA (mtDNA) and plays a crucial role during mtDNA replication by stimulating the activity of the replisome components POLG and TWNK at the replication fork. Promotes the activity of the gamma complex polymerase POLG, largely by organizing the template DNA and eliminating secondary structures to favor ss-DNA conformations that facilitate POLG activity. In addition it is able to promote the 5'-3' unwinding activity of the mtDNA helicase TWNK. May also function in mtDNA repair. In Bos taurus (Bovine), this protein is Single-stranded DNA-binding protein, mitochondrial (SSBP1).